We begin with the raw amino-acid sequence, 988 residues long: Kinesin-like protein CIN8 (988 aa).

Residues 33-470 form the Kinesin motor domain; the sequence is NILVAVRCRG…LEYASKAKNI (438 aa). Residue 125–132 participates in ATP binding; that stretch reads GMTSTGKT. Residues 206 to 301 form a disordered region; sequence FDSNVNGTSA…NSNNTNQQQS (96 aa). Residues 208–237 are compositionally biased toward low complexity; sequence SNVNGTSASGSSSRSSSRNNSPRSAPDNSR. Residues 248–280 show a composition bias toward polar residues; sequence HNTTGNSKISNNNHNKFSRFKQTSQESTRAHAS. Low complexity predominate over residues 281 to 301; that stretch reads NNHQNVHIPNNNSNNTNQQQS. Coiled coils occupy residues 514 to 619 and 707 to 769; these read EHYK…ELQQ and KLAE…MQNF. Positions 965 to 974 are enriched in basic and acidic residues; sequence ALQEKRKPED. The tract at residues 965 to 988 is disordered; sequence ALQEKRKPEDEVLLQAKLQRRNPD.

The protein belongs to the TRAFAC class myosin-kinesin ATPase superfamily. Kinesin family. BimC subfamily.

The protein resides in the cytoplasm. It localises to the cytoskeleton. It is found in the spindle. Its function is as follows. Elongates the mitotic spindle by interacting with spindle microtubules to generate an outward force pushing spindle poles apart. Following spindle assembly, CIN8 and KIP1 apparently act to oppose a force, possibly generated by KAR3, that draws separated poles back together. This is Kinesin-like protein CIN8 (CIN8) from Candida glabrata (strain ATCC 2001 / BCRC 20586 / JCM 3761 / NBRC 0622 / NRRL Y-65 / CBS 138) (Yeast).